We begin with the raw amino-acid sequence, 119 residues long: MGRGNSCGGGQSSLDYLFGGDAPAPKPVPAPRPAPTESNNGPAPPVTAVTATALTTATTSVEPAELNKQIPAGIKTPVNNYARAEGQNTGNFLTDRPSTKVHAAPGGGSSLDYLFTGGK.

Positions 1-11 (MGRGNSCGGGQ) are enriched in gly residues. Disordered regions lie at residues 1 to 47 (MGRG…PPVT) and 85 to 105 (EGQN…HAAP). Over residues 24 to 34 (APKPVPAPRPA) the composition is skewed to pro residues.

It belongs to the SPIRAL1 family. In terms of processing, ubiquitinated. Upon salt-stress induction, it is subject to proteasome-dependent degradation. Ubiquitous. High expression was associated with tissues undergoing rapid cell expansion, including the root elongation zone, hypocotyls of dark grown-seedlings, and cotyledons of light-grown seedlings.

It is found in the cytoplasm. The protein resides in the cytoskeleton. Its subcellular location is the phragmoplast. It localises to the spindle. In terms of biological role, required for directional control of cell elongation. Stabilizes growing ends of cortical microtubules and influences their dynamic properties. Acts redundantly with SP1Ls in maintaining the cortical microtubules organization essential for anisotropic cell growth. Plays a key role in salt stress-induced microtubules disassembly. The protein is Protein SPIRAL1 (SPR1) of Arabidopsis thaliana (Mouse-ear cress).